A 225-amino-acid polypeptide reads, in one-letter code: UPF0758 protein XC_3944 (225 aa).

Positions 102–224 (ALSDPSSVGR…PVSLAERGWV (123 aa)) constitute an MPN domain. H173, H175, and D186 together coordinate Zn(2+). The JAMM motif motif lies at 173–186 (HNHPSGNPEPSEAD).

It belongs to the UPF0758 family.

In Xanthomonas campestris pv. campestris (strain 8004), this protein is UPF0758 protein XC_3944.